Here is a 257-residue protein sequence, read N- to C-terminus: MDRIIEKLESGWWIVSHEQKLWLPYGELPHGLAANFDLVGQRALRIGEWQGEPVWLVLQHRRHDMGSVRQVIDQDAGLFQLAGRGVQLAEFYRSHKFCGYCGHPMHPSKTEWAMLCSHCRERYYPQIAPCIIVAIRREDSILLAQHVRHRNGVHTVLAGFVEVGETLEQAVAREVMEESGIKVKNLRYVTSQPWPFPQSLMTAFMAEYDSGEIVIDPKELLEANWYRYDDLPLLPPPGTVARRLIEDTVAMCRAEYD.

Arg-69 contributes to the substrate binding site. Zn(2+) contacts are provided by Cys-98 and Cys-101. Residue Glu-111 coordinates substrate. Zn(2+)-binding residues include Cys-116 and Cys-119. Tyr-124 is a binding site for substrate. One can recognise a Nudix hydrolase domain in the interval 125 to 248 (PQIAPCIIVA…TVARRLIEDT (124 aa)). 3 residues coordinate a divalent metal cation: Ala-158, Glu-174, and Glu-178. A Nudix box motif is present at residues 159–180 (GFVEVGETLEQAVAREVMEESG). 192–199 (QPWPFPQS) contributes to the substrate binding site. Glu-219 contributes to the a divalent metal cation binding site. Ala-241 provides a ligand contact to substrate.

The protein belongs to the Nudix hydrolase family. NudC subfamily. In terms of assembly, homodimer. Mg(2+) is required as a cofactor. Mn(2+) serves as cofactor. The cofactor is Zn(2+).

The catalysed reaction is a 5'-end NAD(+)-phospho-ribonucleoside in mRNA + H2O = a 5'-end phospho-adenosine-phospho-ribonucleoside in mRNA + beta-nicotinamide D-ribonucleotide + 2 H(+). It catalyses the reaction NAD(+) + H2O = beta-nicotinamide D-ribonucleotide + AMP + 2 H(+). The enzyme catalyses NADH + H2O = reduced beta-nicotinamide D-ribonucleotide + AMP + 2 H(+). Functionally, mRNA decapping enzyme that specifically removes the nicotinamide adenine dinucleotide (NAD) cap from a subset of mRNAs by hydrolyzing the diphosphate linkage to produce nicotinamide mononucleotide (NMN) and 5' monophosphate mRNA. The NAD-cap is present at the 5'-end of some mRNAs and stabilizes RNA against 5'-processing. Has preference for mRNAs with a 5'-end purine. Catalyzes the hydrolysis of a broad range of dinucleotide pyrophosphates. The polypeptide is NAD-capped RNA hydrolase NudC (Salmonella dublin (strain CT_02021853)).